A 612-amino-acid chain; its full sequence is Sulfite reductase [NADPH] flavoprotein alpha-component (612 aa).

A Flavodoxin-like domain is found at 64–202 (VTLISASQTG…QAQQWRQQVV (139 aa)). FMN is bound by residues 70 to 75 (SQTGNA), 117 to 120 (STQG), and 153 to 162 (LGDTSYEHFC). One can recognise an FAD-binding FR-type domain in the interval 247-461 (TAPLTAQLSV…IEHNDNFRLP (215 aa)). FAD contacts are provided by residues Thr-335, Lys-369, 399–402 (RLYS), 417–419 (TVG), Tyr-423, and 432–435 (GGAS). NADP(+)-binding positions include 532 to 533 (SR), 538 to 542 (KIYVQ), and Asp-574. FAD is bound at residue Tyr-612.

Belongs to the NADPH-dependent sulphite reductase flavoprotein subunit CysJ family. It in the N-terminal section; belongs to the flavodoxin family. This sequence in the C-terminal section; belongs to the flavoprotein pyridine nucleotide cytochrome reductase family. Alpha(8)-beta(8). The alpha component is a flavoprotein, the beta component is a hemoprotein. FAD is required as a cofactor. It depends on FMN as a cofactor.

It catalyses the reaction hydrogen sulfide + 3 NADP(+) + 3 H2O = sulfite + 3 NADPH + 4 H(+). The protein operates within sulfur metabolism; hydrogen sulfide biosynthesis; hydrogen sulfide from sulfite (NADPH route): step 1/1. Component of the sulfite reductase complex that catalyzes the 6-electron reduction of sulfite to sulfide. This is one of several activities required for the biosynthesis of L-cysteine from sulfate. The flavoprotein component catalyzes the electron flow from NADPH -&gt; FAD -&gt; FMN to the hemoprotein component. This Yersinia pseudotuberculosis serotype O:1b (strain IP 31758) protein is Sulfite reductase [NADPH] flavoprotein alpha-component.